The chain runs to 279 residues: tRNA (carboxymethyluridine(34)-5-O)-methyltransferase (279 aa).

The interval 172–236 is disordered; it reads KSKSKPKTKS…QQQDQEQERE (65 aa). Basic and acidic residues predominate over residues 200–229; sequence PKERSEYLQRWKEEQQRSKSLDDNDEKQQQ.

Interacts with TRM112.

The protein resides in the cytoplasm. Its subcellular location is the nucleus. The enzyme catalyses 5-(carboxymethyl)uridine(34) in tRNA + S-adenosyl-L-methionine = 5-(2-methoxy-2-oxoethyl)uridine(34) in tRNA + S-adenosyl-L-homocysteine. Its function is as follows. Required for the methylation of the wobble bases at position 34 in tRNA. Appears to have a role in stress-response. This Saccharomyces cerevisiae (strain ATCC 204508 / S288c) (Baker's yeast) protein is tRNA (carboxymethyluridine(34)-5-O)-methyltransferase (TRM9).